Reading from the N-terminus, the 408-residue chain is Aminomethyltransferase, mitochondrial (408 aa).

The transit peptide at 1–30 (MRGGGLWQLGQSVTRRLAQAEKKVIARRCF) directs the protein to the mitochondrion. Residues Glu-235, Arg-266, and Tyr-404 each contribute to the substrate site.

The protein belongs to the GcvT family. In terms of assembly, the glycine cleavage system is composed of four proteins: P, T, L and H.

It localises to the mitochondrion. The catalysed reaction is N(6)-[(R)-S(8)-aminomethyldihydrolipoyl]-L-lysyl-[protein] + (6S)-5,6,7,8-tetrahydrofolate = N(6)-[(R)-dihydrolipoyl]-L-lysyl-[protein] + (6R)-5,10-methylene-5,6,7,8-tetrahydrofolate + NH4(+). Functionally, the glycine cleavage system catalyzes the degradation of glycine. The polypeptide is Aminomethyltransferase, mitochondrial (GDCST) (Mesembryanthemum crystallinum (Common ice plant)).